We begin with the raw amino-acid sequence, 99 residues long: C-C motif chemokine 8 (99 aa).

An N-terminal signal peptide occupies residues 1 to 23; it reads MKVSAGILCLLLVAATFGTQVLA. Position 24 is a pyrrolidone carboxylic acid (Gln-24). 2 cysteine pairs are disulfide-bonded: Cys-34/Cys-59 and Cys-35/Cys-75.

Belongs to the intercrine beta (chemokine CC) family. Monomer or homodimer; in equilibrium.

Its subcellular location is the secreted. In terms of biological role, chemotactic factor that attracts monocytes. This protein can bind heparin. The polypeptide is C-C motif chemokine 8 (CCL8) (Bos taurus (Bovine)).